The sequence spans 493 residues: Galactose-1-phosphate uridylyltransferase (493 aa).

The protein belongs to the galactose-1-phosphate uridylyltransferase type 2 family.

The protein localises to the cytoplasm. It carries out the reaction alpha-D-galactose 1-phosphate + UDP-alpha-D-glucose = alpha-D-glucose 1-phosphate + UDP-alpha-D-galactose. The protein operates within carbohydrate metabolism; galactose metabolism. In Lactococcus lactis subsp. cremoris (strain MG1363), this protein is Galactose-1-phosphate uridylyltransferase.